A 77-amino-acid chain; its full sequence is MKNLLLTFLVVTIVCLDLGYTLICNRVHGLQTCEPAHKFCFSKTVMPFPNHPLTLMGCTYSCPTERNAVCCSTDKCN.

A signal peptide spans 1-21; that stretch reads MKNLLLTFLVVTIVCLDLGYT. Cystine bridges form between cysteine 24/cysteine 40, cysteine 33/cysteine 58, cysteine 62/cysteine 70, and cysteine 71/cysteine 76.

This sequence belongs to the three-finger toxin family. Short-chain subfamily. Expressed by the venom gland.

The protein resides in the secreted. In terms of biological role, this three-finger toxin binds and inhibits the nicotinic acetylcholine receptor (nAChR). This is Short neurotoxin OH-32 from Ophiophagus hannah (King cobra).